The chain runs to 361 residues: Methionine import ATP-binding protein MetN (361 aa).

The region spanning 22-257 is the ABC transporter domain; sequence VRLIDVKRRF…PQTDITRSLL (236 aa). 54–61 is a binding site for ATP; it reads GRSGAGKS.

The protein belongs to the ABC transporter superfamily. Methionine importer (TC 3.A.1.24) family. As to quaternary structure, the complex is composed of two ATP-binding proteins (MetN), two transmembrane proteins (MetI) and a solute-binding protein (MetQ).

It localises to the cell inner membrane. It catalyses the reaction L-methionine(out) + ATP + H2O = L-methionine(in) + ADP + phosphate + H(+). It carries out the reaction D-methionine(out) + ATP + H2O = D-methionine(in) + ADP + phosphate + H(+). Its function is as follows. Part of the ABC transporter complex MetNIQ involved in methionine import. Responsible for energy coupling to the transport system. The chain is Methionine import ATP-binding protein MetN from Rhizobium etli (strain ATCC 51251 / DSM 11541 / JCM 21823 / NBRC 15573 / CFN 42).